The primary structure comprises 2187 residues: Nascent polypeptide-associated complex subunit alpha, muscle-specific form (2187 aa).

Disordered regions lie at residues 1-20 (MPGE…PQPQ), 32-73 (LKVA…STPF), and 172-196 (IPPL…KGTA). Residues 9-20 (VPATEQELPQPQ) show a composition bias toward polar residues. A compositionally biased stretch (polar residues) spans 178–192 (KTSTSQVPSQGTLNL). Position 247 is an asymmetric dimethylarginine (Arg-247). Disordered stretches follow at residues 335–370 (DSGA…LSPK), 579–611 (NTVS…SPLV), 738–835 (PKGS…PKDT), 884–1847 (KETL…PVEK), and 1892–2053 (PEAV…KAMS). A compositionally biased stretch (polar residues) spans 347 to 369 (SAVTNELCSPPGSSNVAGTSLSP). Phosphothreonine is present on Thr-590. Polar residues-rich tracts occupy residues 599 to 609 (AKNTAPSTTSP), 818 to 835 (VTPT…PKDT), and 887 to 905 (LATS…TPKS). Position 822 is a phosphoserine (Ser-822). A compositionally biased stretch (pro residues) spans 941–951 (PHVPPTSPPKS). Residues 976–998 (TPTYPKKSPKPAASKKTPATPSP) are compositionally biased toward low complexity. The segment covering 1106-1122 (TPQNATPNESLAASSQK) has biased composition (polar residues). Ser-1174 and Ser-1177 each carry phosphoserine. The span at 1174-1195 (SPLSPKKASKTAAPKEAPATPS) shows a compositional bias: low complexity. Residue Thr-1364 is modified to Phosphothreonine. Ser-1368 and Ser-1392 each carry phosphoserine. Thr-1398 carries the phosphothreonine modification. Residues Ser-1400 and Ser-1423 each carry the phosphoserine modification. Residues 1429–1440 (VTPSSKKLSQTV) are compositionally biased toward polar residues. Low complexity predominate over residues 1489-1504 (SPSSPKKAPKTAAPPS). Ser-1492 bears the Phosphoserine mark. Residues 1609–1631 (PVTTSLAQTAPPSLQKAPSTTIP) show a composition bias toward polar residues. Composition is skewed to low complexity over residues 1636–1670 (AAPA…TAPK) and 1714–1727 (SSPP…KRAS). A compositionally biased stretch (polar residues) spans 1762–1772 (ACSTGTTTPQA). Low complexity-rich tracts occupy residues 1806–1823 (KSPG…CPDP) and 1892–1914 (PEAV…LAPS). Residues 1950–1954 (PPLIP) carry the PXLXP motif. Over residues 1973–1983 (APKPAGTPAPA) the composition is skewed to pro residues. Acidic residues predominate over residues 2001 to 2014 (SDSDESVPELEEQD). Ser-2015 is modified (phosphoserine; by ILK1). A compositionally biased stretch (low complexity) spans 2016–2029 (TQTATQQAQLAAAA). A required for DNA-binding region spans residues 2041-2052 (QSRSEKKARKAM). The NAC-A/B domain maps to 2042-2107 (SRSEKKARKA…AKIEDLSQQA (66 aa)). The residue at position 2104 (Ser-2104) is a Phosphoserine. Lys-2114 carries the post-translational modification N6-acetyllysine; alternate. Lys-2114 is covalently cross-linked (Glycyl lysine isopeptide (Lys-Gly) (interchain with G-Cter in SUMO2); alternate). A Phosphothreonine; by GSK3-beta modification is found at Thr-2131. A Phosphothreonine modification is found at Thr-2133. Phosphoserine is present on residues Ser-2138, Ser-2158, Ser-2163, and Ser-2175. The region spanning 2148 to 2185 (VEVKDIELVMSQANVSRAKAVRALKNNSNDIVNAIMEL) is the UBA domain.

The protein belongs to the NAC-alpha family. Interacts (via PXLXP motif) with the muscle-restricted histone methyltransferase SMYD1 (via MYND-type zinc finger). Post-translationally, phosphorylation of Ser-2015 by ILK during cell adhesion may promote nuclear localization. Phosphorylation of Thr-2131 by GSK3B may promote proteasome mediated degradation. Specifically expressed in heart and skeletal muscle: it is present in differentiated myotubes but not in myoblasts.

Its subcellular location is the cytoplasm. The protein localises to the nucleus. Its function is as follows. Cardiac- and muscle-specific transcription factor. May act to regulate the expression of genes involved in the development of myotubes. Plays a critical role in ventricular cardiomyocyte expansion and regulates postnatal skeletal muscle growth and regeneration. Involved in the organized assembly of thick and thin filaments of myofibril sarcomeres. The sequence is that of Nascent polypeptide-associated complex subunit alpha, muscle-specific form (Naca) from Mus musculus (Mouse).